The chain runs to 135 residues: Ribonuclease VapC9 (135 aa).

Residues 15-118 (VVDTNVLMYV…LKRKAKQRGI (104 aa)) enclose the PINc domain. Mg(2+)-binding residues include Asp-17 and Asp-88.

Belongs to the PINc/VapC protein family. In terms of assembly, dimer. The cofactor is Mg(2+).

Toxic component of a type II toxin-antitoxin (TA) system. An RNase. The chain is Ribonuclease VapC9 from Archaeoglobus fulgidus (strain ATCC 49558 / DSM 4304 / JCM 9628 / NBRC 100126 / VC-16).